A 464-amino-acid polypeptide reads, in one-letter code: Soluble pyridine nucleotide transhydrogenase (464 aa).

Position 35 to 44 (35 to 44) interacts with FAD; that stretch reads DNRPLVGGNC.

Belongs to the class-I pyridine nucleotide-disulfide oxidoreductase family. It depends on FAD as a cofactor.

It is found in the cytoplasm. The enzyme catalyses NAD(+) + NADPH = NADH + NADP(+). Functionally, conversion of NADPH, generated by peripheral catabolic pathways, to NADH, which can enter the respiratory chain for energy generation. The protein is Soluble pyridine nucleotide transhydrogenase of Ectopseudomonas mendocina (strain ymp) (Pseudomonas mendocina).